Reading from the N-terminus, the 184-residue chain is tRNA (cytidine(56)-2'-O)-methyltransferase (184 aa).

S-adenosyl-L-methionine is bound by residues L87, 112-116 (GAEKV), and 130-137 (VANQPHSE).

The protein belongs to the aTrm56 family. In terms of assembly, homodimer.

The protein resides in the cytoplasm. The catalysed reaction is cytidine(56) in tRNA + S-adenosyl-L-methionine = 2'-O-methylcytidine(56) in tRNA + S-adenosyl-L-homocysteine + H(+). Specifically catalyzes the AdoMet-dependent 2'-O-ribose methylation of cytidine at position 56 in tRNAs. The chain is tRNA (cytidine(56)-2'-O)-methyltransferase from Methanocorpusculum labreanum (strain ATCC 43576 / DSM 4855 / Z).